The primary structure comprises 360 residues: MALTLEELVKRFGGEIAGDAQCKVAGLAPLDQAGPGQLAFLANPKYLSQVETTGAGAVLIAPKDLEKLGAAASGRNFIVTPNPYAYFARVAQMFIDLAAPPRAAGVHPSATIDPAARVADSAVIGPHVTIEAGAVIEDGVQLDANVFVGRGTTIGAGSHLYPNVAVYHGCKIGPRAIVHAGAVIGSDGFGFAPDFVGDGEARTGTWVKIPQVGGVSIGPDVEIGANTTIDRGAMADTVIEECVKIDNQVQIGHNCRIGAYTVIAGCAGIAGSTTIGRHCMIGGAVGIAGHVTLGDYVIVTAKSGVSKSLPKAGIYTSAFPAVDHGEWNRSAALVRNLDKLRDRIKALETALAAQRGDTDA.

The active-site Proton acceptor is the His253.

The protein belongs to the transferase hexapeptide repeat family. LpxD subfamily. As to quaternary structure, homotrimer.

It carries out the reaction a UDP-3-O-[(3R)-3-hydroxyacyl]-alpha-D-glucosamine + a (3R)-hydroxyacyl-[ACP] = a UDP-2-N,3-O-bis[(3R)-3-hydroxyacyl]-alpha-D-glucosamine + holo-[ACP] + H(+). The protein operates within bacterial outer membrane biogenesis; LPS lipid A biosynthesis. Functionally, catalyzes the N-acylation of UDP-3-O-acylglucosamine using 3-hydroxyacyl-ACP as the acyl donor. Is involved in the biosynthesis of lipid A, a phosphorylated glycolipid that anchors the lipopolysaccharide to the outer membrane of the cell. This is UDP-3-O-acylglucosamine N-acyltransferase from Burkholderia multivorans (strain ATCC 17616 / 249).